A 131-amino-acid polypeptide reads, in one-letter code: Conotoxin Cal8.2 (131 aa).

The first 19 residues, 1 to 19, serve as a signal peptide directing secretion; the sequence is MKLLLTLLLGSALMCITLA. Residues 20–38 constitute a propeptide that is removed on maturation; the sequence is DECGLGTHRPVKEVIDNVR.

In terms of processing, contains 4 disulfide bonds. As to expression, expressed by the venom duct.

The protein localises to the secreted. Probable neurotoxin with unknown target. Possibly targets ion channels. The chain is Conotoxin Cal8.2 from Californiconus californicus (California cone).